Reading from the N-terminus, the 312-residue chain is Glyoxylate/hydroxypyruvate reductase A (312 aa).

The active site involves arginine 227. The active-site Proton donor is histidine 275.

The protein belongs to the D-isomer specific 2-hydroxyacid dehydrogenase family. GhrA subfamily.

Its subcellular location is the cytoplasm. The enzyme catalyses glycolate + NADP(+) = glyoxylate + NADPH + H(+). It carries out the reaction (R)-glycerate + NAD(+) = 3-hydroxypyruvate + NADH + H(+). It catalyses the reaction (R)-glycerate + NADP(+) = 3-hydroxypyruvate + NADPH + H(+). Its function is as follows. Catalyzes the NADPH-dependent reduction of glyoxylate and hydroxypyruvate into glycolate and glycerate, respectively. The polypeptide is Glyoxylate/hydroxypyruvate reductase A (Salmonella choleraesuis (strain SC-B67)).